We begin with the raw amino-acid sequence, 226 residues long: RNA-binding protein 24 (226 aa).

Residues 11–88 enclose the RRM domain; sequence TKIFVGGLPY…RKANVNLAYL (78 aa).

It localises to the nucleus. It is found in the cytoplasm. Functionally, multifunctional RNA-binding protein involved in the regulation of pre-mRNA splicing, mRNA stability and mRNA translation important for cell fate decision and differentiation. Plays a major role in pre-mRNA alternative splicing regulation. Mediates preferentially muscle-specific exon inclusion in numerous mRNAs important for striated cardiac and skeletal muscle cell differentiation. Binds to intronic splicing enhancer (ISE) composed of stretches of GU-rich motifs localized in flanking intron of exon that will be included by alternative splicing. Involved in embryonic stem cell (ESC) transition to cardiac cell differentiation by promoting pre-mRNA alternative splicing events of several pluripotency and/or differentiation genes. Plays a role in the regulation of mRNA stability and mRNA translation to which it is bound. Involved in myogenic differentiation by regulating myog levels. Binds to a huge amount of mRNAs. Required for embryonic heart development, sarcomer and M-band formation in striated muscles. The chain is RNA-binding protein 24 (rbm24) from Xenopus tropicalis (Western clawed frog).